Reading from the N-terminus, the 224-residue chain is Uracil phosphoribosyltransferase (224 aa).

38 to 42 contributes to the GTP binding site; that stretch reads KGLVK. 5-phospho-alpha-D-ribose 1-diphosphate contacts are provided by residues arginine 87, arginine 112, and 140–148; that span reads DPMIATGST. Residues isoleucine 204 and 209–211 contribute to the uracil site; that span reads GDA. Aspartate 210 serves as a coordination point for 5-phospho-alpha-D-ribose 1-diphosphate.

Belongs to the UPRTase family. It depends on Mg(2+) as a cofactor.

The catalysed reaction is UMP + diphosphate = 5-phospho-alpha-D-ribose 1-diphosphate + uracil. The protein operates within pyrimidine metabolism; UMP biosynthesis via salvage pathway; UMP from uracil: step 1/1. Allosterically activated by GTP. In terms of biological role, catalyzes the conversion of uracil and 5-phospho-alpha-D-ribose 1-diphosphate (PRPP) to UMP and diphosphate. The sequence is that of Uracil phosphoribosyltransferase from Thermococcus gammatolerans (strain DSM 15229 / JCM 11827 / EJ3).